Reading from the N-terminus, the 128-residue chain is Large ribosomal subunit protein bL12 (128 aa).

It belongs to the bacterial ribosomal protein bL12 family. In terms of assembly, homodimer. Part of the ribosomal stalk of the 50S ribosomal subunit. Forms a multimeric L10(L12)X complex, where L10 forms an elongated spine to which 2 to 4 L12 dimers bind in a sequential fashion. Binds GTP-bound translation factors.

Forms part of the ribosomal stalk which helps the ribosome interact with GTP-bound translation factors. Is thus essential for accurate translation. The chain is Large ribosomal subunit protein bL12 from Streptomyces antibioticus.